A 75-amino-acid chain; its full sequence is U9-theraphotoxin-Cg1a (75 aa).

The N-terminal stretch at 1-21 (MKTLVLFIIFGLAALFLLSSA) is a signal peptide. Positions 22–29 (NELEETER) are excised as a propeptide. 3 disulfide bridges follow: Cys31-Cys46, Cys38-Cys51, and Cys45-Cys58.

Belongs to the neurotoxin 10 (Hwtx-1) family. 43 (Jztx-49) subfamily. In terms of tissue distribution, expressed by the venom gland.

It localises to the secreted. In terms of biological role, probable ion channel inhibitor. The sequence is that of U9-theraphotoxin-Cg1a from Chilobrachys guangxiensis (Chinese earth tiger tarantula).